Here is a 251-residue protein sequence, read N- to C-terminus: 1-(5-phosphoribosyl)-5-[(5-phosphoribosylamino)methylideneamino] imidazole-4-carboxamide isomerase (251 aa).

D8 functions as the Proton acceptor in the catalytic mechanism. D131 functions as the Proton donor in the catalytic mechanism.

It belongs to the HisA/HisF family.

It is found in the cytoplasm. It catalyses the reaction 1-(5-phospho-beta-D-ribosyl)-5-[(5-phospho-beta-D-ribosylamino)methylideneamino]imidazole-4-carboxamide = 5-[(5-phospho-1-deoxy-D-ribulos-1-ylimino)methylamino]-1-(5-phospho-beta-D-ribosyl)imidazole-4-carboxamide. It participates in amino-acid biosynthesis; L-histidine biosynthesis; L-histidine from 5-phospho-alpha-D-ribose 1-diphosphate: step 4/9. In Burkholderia cenocepacia (strain HI2424), this protein is 1-(5-phosphoribosyl)-5-[(5-phosphoribosylamino)methylideneamino] imidazole-4-carboxamide isomerase.